We begin with the raw amino-acid sequence, 187 residues long: Protein P18, mitochondrial (187 aa).

A mitochondrion-targeting transit peptide spans 1–17 (MRRLSSQLMCTAAAVRF). The disordered stretch occupies residues 160 to 187 (NAAKAKADGKEHPSTLAQQQSLFDIKIQ).

Its subcellular location is the mitochondrion inner membrane. In terms of biological role, putative RNA-binding protein. The protein is Protein P18, mitochondrial of Leishmania tarentolae (Sauroleishmania tarentolae).